A 32-amino-acid polypeptide reads, in one-letter code: Fibrinolytic enzyme 2 (32 aa).

The Peptidase S8 domain occupies 1-32 (ISGTSMSCPHVAGRAYVLDTSLRVYLLDTGLR). The active-site Charge relay system is serine 5.

The protein belongs to the peptidase S8 family.

Inhibited by PMSF. Not inhibited by benzamidine, aprotinin, SBTI, EDTA, EGTA, 2-mercaptoethanol, iodoacetic acid or pepstatin A. Functionally, serine protease. Has fibrinolytic and fibrinogenolytic but no plasminogenolytic activity. Cleaves after Arg and Lys residues. Cleaves fibrinogen alpha chain, beta chain and gamma chain in that order. The chain is Fibrinolytic enzyme 2 from Hediste japonica (Polychaete worm).